Consider the following 380-residue polypeptide: D-alanine--D-alanine ligase (380 aa).

Residues 142–348 (KQVLTAHGIR…YADLIDRLIE (207 aa)) form the ATP-grasp domain. 172-227 (QSRLGDNVFIKPANQGSSVGIHKASNVQEYLDGVADAFRYDYKVLVEQTIDGPQEV) serves as a coordination point for ATP. Residues D302, E315, and N317 each coordinate Mg(2+).

The protein belongs to the D-alanine--D-alanine ligase family. Requires Mg(2+) as cofactor. Mn(2+) serves as cofactor.

Its subcellular location is the cytoplasm. The enzyme catalyses 2 D-alanine + ATP = D-alanyl-D-alanine + ADP + phosphate + H(+). Its pathway is cell wall biogenesis; peptidoglycan biosynthesis. Functionally, cell wall formation. This Levilactobacillus brevis (strain ATCC 367 / BCRC 12310 / CIP 105137 / JCM 1170 / LMG 11437 / NCIMB 947 / NCTC 947) (Lactobacillus brevis) protein is D-alanine--D-alanine ligase.